The primary structure comprises 622 residues: Chaperone protein HscA homolog (622 aa).

This sequence belongs to the heat shock protein 70 family.

Chaperone involved in the maturation of iron-sulfur cluster-containing proteins. Has a low intrinsic ATPase activity which is markedly stimulated by HscB. The sequence is that of Chaperone protein HscA homolog from Pseudoalteromonas atlantica (strain T6c / ATCC BAA-1087).